The chain runs to 191 residues: Rho-related GTP-binding protein RhoH (191 aa).

GTP is bound at residue G11–T18. Residues Y33 to T41 carry the Effector region motif. D58 to N62 contacts GTP. The tract at residues Y73–A86 is interaction with ZAP70. Residue T116–D119 participates in GTP binding. C188 carries the post-translational modification Cysteine methyl ester. A lipid anchor (S-geranylgeranyl cysteine) is attached at C188. Residues K189 to F191 constitute a propeptide, removed in mature form.

The protein belongs to the small GTPase superfamily. Rho family. Interacts with GDI1 and GDI2. Interacts with ZAP70 (via SH2 domains) and the interaction is enhanced by its phosphorylation by LCK. Interacts with SYK and the interaction is enhanced by its phosphorylation by FYN. In terms of processing, phosphorylated on tyrosine by LCK. Phosphorylated by FYN. Phosphorylation enhances the interactions with ZAP70 and SYK and is critical for its function in thymocyte development. Expression is widespread in hematopoietic cells, including in bone marrow progenitor cells and in differentiated myeloid as well as lymphoid cells. Expressed at high levels in the thymus and mast cells, found in spleen and low-density bone marrow (LDBM) cells and is detected at a low level in neutrophils. In the thymus it is detected in thymocytes of the thymic cortex but not in non-lymphoid cells of fibrovascular and fibroadipose tissues. Expressed in T-cells, B-cells and mast cells.

The protein resides in the cytoplasm. It localises to the cell membrane. Functionally, binds GTP but lacks intrinsic GTPase activity and is resistant to Rho-specific GTPase-activating proteins. Inhibits the activation of NF-kappa-B by TNF and IKKB and the activation of CRK/p38 by TNF. Inhibits activities of RAC1, RHOA and CDC42. Negatively regulates leukotriene production in neutrophils. Negative regulator of hematopoietic progenitor cell proliferation, survival and migration. Critical regulator of thymocyte development and T-cell antigen receptor (TCR) signaling by mediating recruitment and activation of ZAP70. Required for phosphorylation of CD3Z, membrane translocation of ZAP70 and subsequent activation of the ZAP70-mediated pathways. Essential for efficient beta-selection and positive selection by promoting the ZAP70-dependent phosphorylation of the LAT signalosome during pre-TCR and TCR signaling. Crucial for thymocyte maturation during DN3 to DN4 transition and during positive selection. Plays critical roles in mast cell function by facilitating phosphorylation of SYK in Fc epsilon RI-mediated signal transduction. Essential for the phosphorylation of LAT, LCP2, PLCG1 and PLCG2 and for Ca(2+) mobilization in mast cells. This chain is Rho-related GTP-binding protein RhoH (Rhoh), found in Mus musculus (Mouse).